Here is a 331-residue protein sequence, read N- to C-terminus: Adenosine deaminase (331 aa).

Residues histidine 12 and histidine 14 each contribute to the Zn(2+) site. Substrate-binding residues include histidine 14, aspartate 16, and glycine 170. Residue histidine 197 participates in Zn(2+) binding. The active-site Proton donor is glutamate 200. Aspartate 278 lines the Zn(2+) pocket. Aspartate 279 is a binding site for substrate.

Belongs to the metallo-dependent hydrolases superfamily. Adenosine and AMP deaminases family. Adenosine deaminase subfamily. Zn(2+) is required as a cofactor.

The enzyme catalyses adenosine + H2O + H(+) = inosine + NH4(+). It catalyses the reaction 2'-deoxyadenosine + H2O + H(+) = 2'-deoxyinosine + NH4(+). Catalyzes the hydrolytic deamination of adenosine and 2-deoxyadenosine. The protein is Adenosine deaminase of Shewanella loihica (strain ATCC BAA-1088 / PV-4).